Here is a 302-residue protein sequence, read N- to C-terminus: 4-hydroxy-tetrahydrodipicolinate synthase (302 aa).

Threonine 56 provides a ligand contact to pyruvate. The active-site Proton donor/acceptor is tyrosine 145. Residue lysine 173 is the Schiff-base intermediate with substrate of the active site. Pyruvate is bound at residue valine 215.

It belongs to the DapA family. As to quaternary structure, homotetramer; dimer of dimers.

It is found in the cytoplasm. The enzyme catalyses L-aspartate 4-semialdehyde + pyruvate = (2S,4S)-4-hydroxy-2,3,4,5-tetrahydrodipicolinate + H2O + H(+). Its pathway is amino-acid biosynthesis; L-lysine biosynthesis via DAP pathway; (S)-tetrahydrodipicolinate from L-aspartate: step 3/4. In terms of biological role, catalyzes the condensation of (S)-aspartate-beta-semialdehyde [(S)-ASA] and pyruvate to 4-hydroxy-tetrahydrodipicolinate (HTPA). This is 4-hydroxy-tetrahydrodipicolinate synthase from Prochlorococcus marinus subsp. pastoris (strain CCMP1986 / NIES-2087 / MED4).